The following is a 196-amino-acid chain: Pro-FMRFamide-related neuropeptide VF (196 aa).

An N-terminal signal peptide occupies residues M1 to C26. Residues A27 to R55 constitute a propeptide that is removed on maturation. Residue F92 is modified to Phenylalanine amide. Propeptides lie at residues N95–E99 and N115–V121. F131 bears the Phenylalanine amide mark. A propeptide spanning residues T134–K196 is cleaved from the precursor.

This sequence belongs to the FARP (FMRFamide related peptide) family. In terms of tissue distribution, specifically expressed in the retina. As to expression, detected in the hypothalamus.

It localises to the secreted. Its function is as follows. Efficiently inhibits forskolin-induced production of cAMP. Acts as a potent negative regulator of gonadotropin synthesis and secretion. Induces secretion of prolactin. Functionally, efficiently inhibits forskolin-induced production of cAMP. Blocks morphine-induced analgesia. Shows no inhibitory activity of forskolin-induced production of cAMP. The protein is Pro-FMRFamide-related neuropeptide VF of Homo sapiens (Human).